A 159-amino-acid polypeptide reads, in one-letter code: Transmembrane protein 88 (159 aa).

The next 2 helical transmembrane spans lie at 43–63 and 88–108; these read LLLLALVLGTILLPAVIMLGF and FTALLVTGFLLLVPLLVLALA.

The protein belongs to the TMEM88 family. Interacts (via C-terminus) with DVL1.

It localises to the cell membrane. In terms of biological role, inhibits the Wnt/beta-catenin signaling pathway. Crucial for heart development and acts downstream of GATA factors in the pre-cardiac mesoderm to specify lineage commitment of cardiomyocyte development. This chain is Transmembrane protein 88 (Tmem88), found in Mus musculus (Mouse).